Reading from the N-terminus, the 453-residue chain is Bestrophin homolog 5 (453 aa).

4 consecutive transmembrane segments (helical) span residues E78–T98, D113–I133, I275–I295, and L314–A334.

This sequence belongs to the anion channel-forming bestrophin (TC 1.A.46) family. Calcium-sensitive chloride channel subfamily. As to quaternary structure, forms oligomers.

The protein resides in the cell membrane. Functionally, forms chloride channels. The chain is Bestrophin homolog 5 (best-5) from Caenorhabditis elegans.